We begin with the raw amino-acid sequence, 417 residues long: Blood group Rh(D) polypeptide (417 aa).

The next 11 helical transmembrane spans lie at Cys-12–Thr-32, Leu-44–Phe-64, Val-77–Phe-97, Val-107–Val-127, Val-130–Leu-150, Met-167–Leu-187, Thr-203–Phe-223, Val-238–Leu-258, Leu-287–Gly-307, Leu-334–Ala-354, and Met-358–Leu-378.

Belongs to the ammonium transporter (TC 2.A.49) family. Rh subfamily. In terms of processing, palmitoylated. In terms of tissue distribution, restricted to tissues or cell lines expressing erythroid characters.

The protein localises to the cell membrane. Functionally, may be part of an oligomeric complex which is likely to have a transport or channel function in the erythrocyte membrane. The chain is Blood group Rh(D) polypeptide (RHD) from Homo sapiens (Human).